The primary structure comprises 609 residues: Alpha-glucosides permease MPH2 (609 aa).

The Cytoplasmic portion of the chain corresponds to 1 to 106 (MKNLSFLINR…AAAWSLLVST (106 aa)). The chain crosses the membrane as a helical span at residues 107–127 (TLIMEGYDTAILGAFYALPIF). The Extracellular segment spans residues 128–142 (QRKFGSQNDKTGEWE). A helical membrane pass occupies residues 143-163 (ISASWQIGLTLCYMAGEIVGL). Topologically, residues 164 to 178 (QLTGPSVDLVGNRYT) are cytoplasmic. A helical membrane pass occupies residues 179 to 199 (LIIALFFLAAFTFILYFCNSL). A topological domain (extracellular) is located at residue glycine 200. The chain crosses the membrane as a helical span at residues 201-221 (MIAVGQALCGMPWGCFQCLTV). Over 222–234 (SYASEICPLALRY) the chain is Cytoplasmic. Residues 235–255 (YLTTYSNLCWLFGQLFAAGIM) form a helical membrane-spanning segment. Residues 256–270 (KNSQKKYADSELGYK) lie on the Extracellular side of the membrane. Residues 271 to 291 (LPFALQWILPVPLALGIFFAP) form a helical membrane-spanning segment. At 292–363 (ESPWWLVKKG…EDKINRRRTR (72 aa)) the chain is on the cytoplasmic side. A helical transmembrane segment spans residues 364-384 (ITCLCWAGQATCGSILIGYST). Topologically, residues 385-397 (YFYEKAGVSTEMS) are extracellular. The chain crosses the membrane as a helical span at residues 398-418 (FTFSIIQYCLGICATFLSWWA). Residues 419–426 (SKYFGRYD) are Cytoplasmic-facing. The chain crosses the membrane as a helical span at residues 427–447 (LYAFGLAFQTIVFFIIGGLGC). Topologically, residues 448–459 (SSTHGSKMGSGS) are extracellular. A helical membrane pass occupies residues 460–480 (LLMAVAFFYNLGIAPVVFCLV). The Cytoplasmic portion of the chain corresponds to 481-492 (SEMPSSRLRTKT). Residues 493–513 (IILARNTYNVVSIICSVLILY) form a helical membrane-spanning segment. Residues 514–525 (QLNSKKWNWGAK) are Extracellular-facing. Residues 526 to 546 (SGFFWGVLCFCTLIWAVVDLP) traverse the membrane as a helical segment. At 547-609 (ETAGKTFVEI…QRNSNVSHHL (63 aa)) the chain is on the cytoplasmic side.

This sequence belongs to the major facilitator superfamily. Sugar transporter (TC 2.A.1.1) family.

The protein localises to the cell membrane. Its function is as follows. High-affinity uptake of maltose and maltotriose. Also transports alpha-methylglucoside, glucose and turanose but not melezitose or trehalose. The polypeptide is Alpha-glucosides permease MPH2 (MPH2) (Saccharomyces cerevisiae (strain ATCC 204508 / S288c) (Baker's yeast)).